Reading from the N-terminus, the 348-residue chain is Lipoyl synthase, mitochondrial (348 aa).

[4Fe-4S] cluster contacts are provided by Cys-105, Cys-110, Cys-116, Cys-136, Cys-140, and Cys-143. The Radical SAM core domain maps to 121-341 (ETGTATATIM…RTXXLVSYVL (221 aa)).

The protein belongs to the radical SAM superfamily. Lipoyl synthase family. [4Fe-4S] cluster is required as a cofactor.

The protein localises to the mitochondrion. It catalyses the reaction [[Fe-S] cluster scaffold protein carrying a second [4Fe-4S](2+) cluster] + N(6)-octanoyl-L-lysyl-[protein] + 2 oxidized [2Fe-2S]-[ferredoxin] + 2 S-adenosyl-L-methionine + 4 H(+) = [[Fe-S] cluster scaffold protein] + N(6)-[(R)-dihydrolipoyl]-L-lysyl-[protein] + 4 Fe(3+) + 2 hydrogen sulfide + 2 5'-deoxyadenosine + 2 L-methionine + 2 reduced [2Fe-2S]-[ferredoxin]. Its pathway is protein modification; protein lipoylation via endogenous pathway; protein N(6)-(lipoyl)lysine from octanoyl-[acyl-carrier-protein]: step 2/2. Functionally, catalyzes the radical-mediated insertion of two sulfur atoms into the C-6 and C-8 positions of the octanoyl moiety bound to the lipoyl domains of lipoate-dependent enzymes, thereby converting the octanoylated domains into lipoylated derivatives. The chain is Lipoyl synthase, mitochondrial (LIP1) from Ricinus communis (Castor bean).